Reading from the N-terminus, the 430-residue chain is MKTSKEITINKKNKFGAEILCIGSEILLGNIVNTNSQWIAEQLAILGIPHFRQTVIGDNPARLEEAILEASNRSEILITTGGLGPTPDDITTKVIADTFKTPLEQRNDILIDLRNKSKDKDSKLSDSQKKQSLVPKGAKIINNYSGTAPGIYWSPKENFTILTFPGVPSELKEMWAKEASKLLISNNLSKEVISSKVLHFAGISESLLADKIPHLLISKNPTVATYARTGEVKVRITAKGENSEETNRLIEPIKKELTQITGLKCFGIDNETLEEIVFKLLLKRKETIAVAESCTGGGIGSKLTKIPGSSKIFHGGVIAYNNSIKQRLLGVPEEIINTHGAVSKPVVESMARGVQIKFKVNWAISVSGIAGPTGGSKSKPVGLVNFCIKGPKTLITWEENFGSNKTREDIQKLSVLNALDRLRLSIIMAN.

The protein belongs to the CinA family.

The chain is CinA-like protein from Prochlorococcus marinus (strain NATL1A).